We begin with the raw amino-acid sequence, 2850 residues long: Hornerin (2850 aa).

The tract at residues M1–L81 is S-100-like. EF-hand domains lie at D13–P48 and N49–A84. Ca(2+)-binding residues include T27, E32, D62, D64, N66, K68, and E73. Repeat copies occupy residues S97–H187, Q188–G278, S279–G369, H370–G460, H474–G566, Q593–G683, S685–G747, L748–G836, S839–H875, H876–G965, Q966–G1004, P1007–G1097, and Q1098–G1188. The span at K100–E110 shows a compositional bias: basic and acidic residues. Disordered stretches follow at residues K100–S154 and S166–S2817. Residues S125–V144 are compositionally biased toward polar residues. 2 stretches are compositionally biased toward low complexity: residues G167–R192 and G226–G248. Gly residues predominate over residues S249–Q259. 2 stretches are compositionally biased toward low complexity: residues S276–S308 and G317–G421. A compositionally biased stretch (gly residues) spans Q422–S433. 2 stretches are compositionally biased toward low complexity: residues S449 to F465 and E473 to G482. A compositionally biased stretch (gly residues) spans S483–Q493. Composition is skewed to low complexity over residues H494–G529, S555–S661, G670–S724, R732–H765, G782–H806, and G818–E871. S659 and S661 each carry phosphoserine. Residues G884 to S900 are compositionally biased toward gly residues. S890 is subject to Phosphoserine. Low complexity-rich tracts occupy residues G901 to R921 and G931 to H996. Phosphoserine is present on residues S993 and S1008. 2 stretches are compositionally biased toward low complexity: residues G1019–L1050 and S1057–Y1115. Over residues G1116–G1132 the composition is skewed to gly residues. Low complexity-rich tracts occupy residues S1133–Q1156 and G1166–G1184. Residues S1185 to Q1195 show a composition bias toward gly residues. At R1205 the chain carries Omega-N-methylarginine. Composition is skewed to low complexity over residues S1211–H1232 and G1253–S1276. Repeat 14 spans residues S1215–G1305. The segment covering H1280–G1301 has biased composition (polar residues). Low complexity-rich tracts occupy residues S1309–T1322, G1331–Y1349, G1370–R1390, G1400–S1438, and S1445–H1466. 16 repeat units span residues Q1332–G1422, H1423–G1474, P1477–G1567, Q1568–G1658, S1685–G1775, Q1802–G1892, H1893–G1944, P1947–G2037, Q2038–G2128, S2155–G2245, Q2272–G2362, H2363–G2414, P2417–G2507, Q2508–G2598, S2625–G2715, and H2716–G2806. S1463 and S1478 each carry phosphoserine. Low complexity-rich tracts occupy residues G1489–L1520 and S1527–Y1585. Over residues G1586–G1602 the composition is skewed to gly residues. Low complexity-rich tracts occupy residues S1603–Q1626 and G1636–G1654. A compositionally biased stretch (gly residues) spans S1655–Q1665. Positions S1682–H1702 are enriched in low complexity. Phosphoserine is present on residues S1712 and S1714. The segment covering G1723–S1746 has biased composition (low complexity). The span at H1750–G1771 shows a compositional bias: polar residues. Composition is skewed to low complexity over residues S1779–S1831, G1840–R1860, and G1870–H1936. S1829 and S1831 each carry phosphoserine. S1933 and S1948 each carry phosphoserine. 2 stretches are compositionally biased toward low complexity: residues G1959–L1990 and S1997–Y2055. Gly residues predominate over residues G2056 to G2072. Composition is skewed to low complexity over residues S2073–Q2096 and G2106–G2124. The span at S2125–Q2135 shows a compositional bias: gly residues. Composition is skewed to low complexity over residues S2151–H2172 and G2193–S2216. Positions H2220–G2241 are enriched in polar residues. 4 stretches are compositionally biased toward low complexity: residues S2249 to S2301, G2310 to R2330, G2340 to S2378, and S2385 to H2406. S2299 and S2301 each carry phosphoserine. Phosphoserine is present on residues S2403 and S2418. Low complexity-rich tracts occupy residues G2429 to L2460 and S2467 to Y2525. Gly residues predominate over residues G2526–G2542. 2 stretches are compositionally biased toward low complexity: residues S2543–Q2566 and G2576–G2594. Over residues S2595–Q2605 the composition is skewed to gly residues. Over residues S2621–H2642 the composition is skewed to low complexity. Phosphoserine occurs at positions 2652 and 2654. A compositionally biased stretch (low complexity) spans G2663–G2682. The segment covering E2698–G2711 has biased composition (polar residues). Composition is skewed to low complexity over residues S2719–T2732, G2741–Y2759, and S2795–G2816.

Belongs to the S100-fused protein family. The protein in the N-terminal section; belongs to the S-100 family. Post-translationally, processed during the process of epidermal differentiation. In terms of processing, forms covalent cross-links mediated by transglutaminase TGM3, between glutamine and the epsilon-amino group of lysine residues (in vitro). In terms of tissue distribution, expressed in cornified epidermis, psoriatic and regenerating skin after wounding. Found in the upper granular layer and in the entire cornified layer of epidermis.

The protein resides in the cytoplasmic granule. In terms of biological role, component of the epidermal cornified cell envelopes. This is Hornerin (HRNR) from Homo sapiens (Human).